The chain runs to 122 residues: MIQQETRLKVADNSGAREVLTIKVLGGSGRKTANIGDVIVCTVKQATPGGVVKKGDVVRAVVVRSKSGARRNDGSYIKFDENACVIIRDDKSPRGTRIFGPVARELRDNNFMKIVSLAPEVL.

It belongs to the universal ribosomal protein uL14 family. In terms of assembly, part of the 50S ribosomal subunit. Forms a cluster with proteins L3 and L19. In the 70S ribosome, L14 and L19 interact and together make contacts with the 16S rRNA in bridges B5 and B8.

Functionally, binds to 23S rRNA. Forms part of two intersubunit bridges in the 70S ribosome. This chain is Large ribosomal subunit protein uL14, found in Bacillus licheniformis (strain ATCC 14580 / DSM 13 / JCM 2505 / CCUG 7422 / NBRC 12200 / NCIMB 9375 / NCTC 10341 / NRRL NRS-1264 / Gibson 46).